The following is a 160-amino-acid chain: Serine-protein kinase RsbW (160 aa).

This sequence belongs to the anti-sigma-factor family.

It catalyses the reaction L-seryl-[protein] + ATP = O-phospho-L-seryl-[protein] + ADP + H(+). The catalysed reaction is L-threonyl-[protein] + ATP = O-phospho-L-threonyl-[protein] + ADP + H(+). Its function is as follows. Negative regulator of sigma-B activity. Phosphorylates and inactivates its specific antagonist protein, RsbV. Upon phosphorylation of RsbV, RsbW is released and binds to sigma-B, thereby blocking its ability to form an RNA polymerase holoenzyme (E-sigma-B). The protein is Serine-protein kinase RsbW of Bacillus mycoides (strain KBAB4) (Bacillus weihenstephanensis).